Reading from the N-terminus, the 268-residue chain is Interleukin-1 beta (268 aa).

A propeptide spanning residues 1-115 is cleaved from the precursor; that stretch reads MAAVPDTSDM…DNWDEGYVCD (115 aa).

Belongs to the IL-1 family. In terms of assembly, monomer. In its precursor form, weakly interacts with full-length MEFV; the mature cytokine does not interact at all. Interacts with integrins ITGAV:ITGBV and ITGA5:ITGB1; integrin-binding is required for IL1B signaling. Interacts with cargo receptor TMED10; the interaction is direct and is required for the secretion of IL1B mature form. Interacts with HSP90AB1; the interaction facilitates cargo translocation into the ERGIC. Interacts with HSP90B1; the interaction facilitates cargo translocation into the ERGIC.

It localises to the cytoplasm. The protein localises to the cytosol. It is found in the secreted. The protein resides in the lysosome. Its subcellular location is the extracellular exosome. Its function is as follows. Potent pro-inflammatory cytokine. Initially discovered as the major endogenous pyrogen, induces prostaglandin synthesis, neutrophil influx and activation, T-cell activation and cytokine production, B-cell activation and antibody production, and fibroblast proliferation and collagen production. Promotes Th17 differentiation of T-cells. Synergizes with IL12/interleukin-12 to induce IFNG synthesis from T-helper 1 (Th1) cells. Plays a role in angiogenesis by inducing VEGF production synergistically with TNF and IL6. Involved in transduction of inflammation downstream of pyroptosis: its mature form is specifically released in the extracellular milieu by passing through the gasdermin-D (GSDMD) pore. In Equus caballus (Horse), this protein is Interleukin-1 beta (IL1B).